A 351-amino-acid chain; its full sequence is Phospho-N-acetylmuramoyl-pentapeptide-transferase (351 aa).

The next 10 helical transmembrane spans lie at 17 to 37, 62 to 82, 85 to 105, 130 to 150, 158 to 178, 190 to 210, 230 to 250, 254 to 274, 279 to 299, and 328 to 348; these read MAYA…YIIL, GIPT…LVFW, ILNV…FLGF, IIFS…HVSV, SFQI…LISA, GLAI…AYLT, LVIF…FNAY, IMMG…AALI, ILFS…IIQV, and QVVI…LSTI.

Belongs to the glycosyltransferase 4 family. MraY subfamily. Requires Mg(2+) as cofactor.

It localises to the cell inner membrane. It carries out the reaction UDP-N-acetyl-alpha-D-muramoyl-L-alanyl-gamma-D-glutamyl-meso-2,6-diaminopimeloyl-D-alanyl-D-alanine + di-trans,octa-cis-undecaprenyl phosphate = di-trans,octa-cis-undecaprenyl diphospho-N-acetyl-alpha-D-muramoyl-L-alanyl-D-glutamyl-meso-2,6-diaminopimeloyl-D-alanyl-D-alanine + UMP. The protein operates within cell wall biogenesis; peptidoglycan biosynthesis. In terms of biological role, catalyzes the initial step of the lipid cycle reactions in the biosynthesis of the cell wall peptidoglycan: transfers peptidoglycan precursor phospho-MurNAc-pentapeptide from UDP-MurNAc-pentapeptide onto the lipid carrier undecaprenyl phosphate, yielding undecaprenyl-pyrophosphoryl-MurNAc-pentapeptide, known as lipid I. This chain is Phospho-N-acetylmuramoyl-pentapeptide-transferase, found in Borreliella burgdorferi (strain ATCC 35210 / DSM 4680 / CIP 102532 / B31) (Borrelia burgdorferi).